The chain runs to 308 residues: Staphylococcal superantigen-like 4 (308 aa).

Positions M1–A30 are cleaved as a signal peptide. Residues A28 to N117 form a disordered region. 2 stretches are compositionally biased toward polar residues: residues P33–S47 and S55–A76. Residues T77–P93 are compositionally biased toward low complexity. Residues Q94–T114 are compositionally biased toward polar residues. The tract at residues V180–Y278 is sialyl Lewis X-binding.

The protein belongs to the staphylococcal/streptococcal toxin family.

It localises to the secreted. Secreted protein that plays a role in immune innate response inhibition by interfering with host TLR2-mediated pathway. This is Staphylococcal superantigen-like 4 from Staphylococcus aureus (strain Newman).